We begin with the raw amino-acid sequence, 309 residues long: 4-hydroxy-tetrahydrodipicolinate synthase (309 aa).

Thr-51 is a pyruvate binding site. Catalysis depends on Tyr-140, which acts as the Proton donor/acceptor. Lys-168 (schiff-base intermediate with substrate) is an active-site residue. Ile-209 is a pyruvate binding site.

Belongs to the DapA family. Homotetramer; dimer of dimers.

It is found in the cytoplasm. It catalyses the reaction L-aspartate 4-semialdehyde + pyruvate = (2S,4S)-4-hydroxy-2,3,4,5-tetrahydrodipicolinate + H2O + H(+). The protein operates within amino-acid biosynthesis; L-lysine biosynthesis via DAP pathway; (S)-tetrahydrodipicolinate from L-aspartate: step 3/4. Functionally, catalyzes the condensation of (S)-aspartate-beta-semialdehyde [(S)-ASA] and pyruvate to 4-hydroxy-tetrahydrodipicolinate (HTPA). This chain is 4-hydroxy-tetrahydrodipicolinate synthase, found in Streptococcus uberis (strain ATCC BAA-854 / 0140J).